Consider the following 325-residue polypeptide: MFRKIHSIFNSSPQRKTAAESPFYEGASPAVKLIRSSSMYVVGDHGEKFSESLKKYKSTSSMDTSLYYLRQEEDRAWMYSRTQDCLQYLQELLALRKKYLSSFSDLKPHRTQGISSTSSKSSKGGKKTPVRSTPKEIKKATPKKYSQFSADVAEAIAFFDSIIAELDTERRPRAAEASLPNEDVDFDVATSSREHSLHSNWILRAPRRHSEDIAAHTVHTVDGQFRRSTEHRTVGTQRRLERHPIYLPKAVEGAFNTWKFKPKACKKDLGSSRQILFNFSGEDMEWDAELFALEPQLSPGEDYYETENPKGQWLLRERLWERTVP.

The disordered stretch occupies residues 108 to 141 (PHRTQGISSTSSKSSKGGKKTPVRSTPKEIKKAT).

This is an uncharacterized protein from Homo sapiens (Human).